Consider the following 693-residue polypeptide: Polyribonucleotide nucleotidyltransferase (693 aa).

Mg(2+)-binding residues include Asp489 and Asp495. One can recognise a KH domain in the interval 556-615 (PQIHVMNINPAKIKDVVGRGGATVKGIVEKTGAQIDTSDSGEVKVFAKDKKSMDMAVAMI). An S1 motif domain is found at 625 to 693 (GQVYKGKIVK…GRVKLSLVAR (69 aa)).

It belongs to the polyribonucleotide nucleotidyltransferase family. Component of the RNA degradosome, which is a multiprotein complex involved in RNA processing and mRNA degradation. Requires Mg(2+) as cofactor.

It localises to the cytoplasm. It catalyses the reaction RNA(n+1) + phosphate = RNA(n) + a ribonucleoside 5'-diphosphate. Involved in mRNA degradation. Catalyzes the phosphorolysis of single-stranded polyribonucleotides processively in the 3'- to 5'-direction. This Francisella tularensis subsp. holarctica (strain OSU18) protein is Polyribonucleotide nucleotidyltransferase.